The sequence spans 187 residues: Accessory gene regulator protein B (187 aa).

A run of 5 helical transmembrane segments spans residues 49–69, 82–102, 106–126, 144–164, and 166–186; these read ISIFLSVFLFTLVTHLSYMLI, ILCYIQSILTFVFVPYFLINI, FTYLLALSIIGLISVVIYAPA, LSIIMYLLVLILSLIIHPFYA, and FMLLGILVESITLLPIFFPKE.

This sequence belongs to the AgrB family.

The protein localises to the cell membrane. Essential for the production of a quorum sensing system signal molecule, the autoinducing peptide (AIP). This quorum sensing system is responsible for the regulation of the expression of virulence factor genes. Involved in the proteolytic processing of AgrD, the precursor of AIP. The polypeptide is Accessory gene regulator protein B (Staphylococcus aureus (strain Mu50 / ATCC 700699)).